A 490-amino-acid polypeptide reads, in one-letter code: Betaine aldehyde dehydrogenase (490 aa).

K(+) is bound by residues Thr26, Ile27, and Asp93. 150–152 (GAW) lines the NAD(+) pocket. The active-site Charge relay system is the Lys162. Residue 176 to 179 (KPSE) participates in NAD(+) binding. Val180 contributes to the K(+) binding site. An NAD(+)-binding site is contributed by 230-233 (GVAS). A K(+)-binding site is contributed by Leu246. The Proton acceptor role is filled by Glu252. 3 residues coordinate NAD(+): Gly254, Cys286, and Glu387. The Nucleophile role is filled by Cys286. Cys286 is modified (cysteine sulfenic acid (-SOH)). K(+) is bound by residues Lys457 and Gly460. Glu464 serves as the catalytic Charge relay system.

It belongs to the aldehyde dehydrogenase family. In terms of assembly, dimer of dimers. It depends on K(+) as a cofactor.

The catalysed reaction is betaine aldehyde + NAD(+) + H2O = glycine betaine + NADH + 2 H(+). It participates in amine and polyamine biosynthesis; betaine biosynthesis via choline pathway; betaine from betaine aldehyde: step 1/1. Involved in the biosynthesis of the osmoprotectant glycine betaine. Catalyzes the irreversible oxidation of betaine aldehyde to the corresponding acid. The polypeptide is Betaine aldehyde dehydrogenase (Klebsiella pneumoniae (strain 342)).